A 442-amino-acid polypeptide reads, in one-letter code: Plasmalemma vesicle-associated protein (442 aa).

The Cytoplasmic segment spans residues M1–Y27. The helical; Signal-anchor for type II membrane protein transmembrane segment at F28–V48 threads the bilayer. Residues Y49 to G442 are Extracellular-facing. Residues E57–L77 adopt a coiled-coil conformation. Residues N83, N89, N113, and N151 are each glycosylated (N-linked (GlcNAc...) asparagine). Coiled-coil stretches lie at residues K202 to C225 and S280 to D387. 2 disordered regions span residues N301–E328 and S394–L418. The segment covering Q319–E328 has biased composition (basic and acidic residues).

In terms of assembly, homodimer. In terms of tissue distribution, expressed in lung, kidney, heart, aorta, placenta, muscle, pituitary gland, adrenals, mammary gland, bladder, lymph node, bone marrow, trachea, digestive tract, liver and tumor-associated endothelium.

It is found in the cell membrane. The protein resides in the membrane. The protein localises to the caveola. It localises to the cytoplasm. Its subcellular location is the perinuclear region. Its function is as follows. Endothelial cell-specific membrane protein involved in the formation of the diaphragms that bridge endothelial fenestrae. It is also required for the formation of stomata of caveolae and transendothelial channels. Functions in microvascular permeability, endothelial fenestrae contributing to the passage of water and solutes and regulating transcellular versus paracellular flow in different organs. Plays a specific role in embryonic development. The chain is Plasmalemma vesicle-associated protein (PLVAP) from Homo sapiens (Human).